The following is a 474-amino-acid chain: Probable glycine dehydrogenase (decarboxylating) subunit 2 (474 aa).

Lysine 266 is subject to N6-(pyridoxal phosphate)lysine.

It belongs to the GcvP family. C-terminal subunit subfamily. In terms of assembly, the glycine cleavage system is composed of four proteins: P, T, L and H. In this organism, the P 'protein' is a heterodimer of two subunits. Pyridoxal 5'-phosphate is required as a cofactor.

It carries out the reaction N(6)-[(R)-lipoyl]-L-lysyl-[glycine-cleavage complex H protein] + glycine + H(+) = N(6)-[(R)-S(8)-aminomethyldihydrolipoyl]-L-lysyl-[glycine-cleavage complex H protein] + CO2. Functionally, the glycine cleavage system catalyzes the degradation of glycine. The P protein binds the alpha-amino group of glycine through its pyridoxal phosphate cofactor; CO(2) is released and the remaining methylamine moiety is then transferred to the lipoamide cofactor of the H protein. The chain is Probable glycine dehydrogenase (decarboxylating) subunit 2 from Thermus thermophilus (strain ATCC 27634 / DSM 579 / HB8).